Reading from the N-terminus, the 295-residue chain is Iron-sulfur cluster carrier protein (295 aa).

Residue 38-45 (GKGGVGKS) participates in ATP binding.

This sequence belongs to the Mrp/NBP35 ATP-binding proteins family. Homodimer.

In terms of biological role, binds and transfers iron-sulfur (Fe-S) clusters to target apoproteins. Can hydrolyze ATP. This chain is Iron-sulfur cluster carrier protein, found in Pyrococcus abyssi (strain GE5 / Orsay).